The sequence spans 140 residues: Small ribosomal subunit protein uS12m (140 aa).

A mitochondrion-targeting transit peptide spans 1 to 30; the sequence is MNFLRQSFGITKQLASQAIQCSYETAVRGM.

It belongs to the universal ribosomal protein uS12 family.

Its subcellular location is the mitochondrion. In Drosophila melanogaster (Fruit fly), this protein is Small ribosomal subunit protein uS12m (tko).